The primary structure comprises 302 residues: Glycine--tRNA ligase alpha subunit (302 aa).

It belongs to the class-II aminoacyl-tRNA synthetase family. In terms of assembly, tetramer of two alpha and two beta subunits.

The protein localises to the cytoplasm. The catalysed reaction is tRNA(Gly) + glycine + ATP = glycyl-tRNA(Gly) + AMP + diphosphate. In Xanthomonas oryzae pv. oryzae (strain PXO99A), this protein is Glycine--tRNA ligase alpha subunit.